The primary structure comprises 456 residues: Bestrophin homolog 18 (456 aa).

4 helical membrane-spanning segments follow: residues 29-49, 83-103, 234-254, and 267-287; these read WSAIWIQYSVWLGLYFLVSAI, GFFIAGVLRRFWYLYDIIGFI, IIYPTIVCLAVHMYFFVGILA, and MIDLVFPFMTSIQFVFYMGWL. The tract at residues 416–456 is disordered; that stretch reads ASSSRSLERQRSPGSFRMETLTPGSPTNTPIEPIDKIDKKK.

Belongs to the anion channel-forming bestrophin (TC 1.A.46) family. Calcium-sensitive chloride channel subfamily. In terms of assembly, forms oligomers.

The protein localises to the cell membrane. Its function is as follows. Forms chloride channels. The sequence is that of Bestrophin homolog 18 (best-18) from Caenorhabditis elegans.